The following is a 331-amino-acid chain: MHTAEILETLASGGVLPPETAHMAFDRLMSGEMTPAQAGSFLMGLRSHGETPELVASAVRAALAHARLIQGLEYDRIDIVGTGGDGRNSFNCSTAAALTLAGMGYKVVKHGNRAVSSTSGSADVVEGLGLPLETAPEDVPVLLARHNFVFLFAPFYHPAFRHVMPVRRDLGIRTLFNVLGPLLNPARPTRMLLGVAKPAMLHTMADALLLTGVRRAAVVHGAGGYDELTTMGPARVVMVRDGATEEMEINPADHGFAPCTPAQLEVHDRQEALEVMRLLLAGEGPAPMLDMMAFNAGLAVYLMEDSMPISAAMARARQAVAGGAGGKVLDA.

Residues Gly81, 84–85, Ser89, 91–94, 109–117, and Ser121 each bind 5-phospho-alpha-D-ribose 1-diphosphate; these read GD, NCST, and KHGNRAVSS. Gly81 is an anthranilate binding site. Position 93 (Ser93) interacts with Mg(2+). Asn112 contributes to the anthranilate binding site. An anthranilate-binding site is contributed by Arg167. Residues Asp226 and Glu227 each coordinate Mg(2+).

The protein belongs to the anthranilate phosphoribosyltransferase family. As to quaternary structure, homodimer. Mg(2+) is required as a cofactor.

The enzyme catalyses N-(5-phospho-beta-D-ribosyl)anthranilate + diphosphate = 5-phospho-alpha-D-ribose 1-diphosphate + anthranilate. It participates in amino-acid biosynthesis; L-tryptophan biosynthesis; L-tryptophan from chorismate: step 2/5. In terms of biological role, catalyzes the transfer of the phosphoribosyl group of 5-phosphorylribose-1-pyrophosphate (PRPP) to anthranilate to yield N-(5'-phosphoribosyl)-anthranilate (PRA). The polypeptide is Anthranilate phosphoribosyltransferase (Oleidesulfovibrio alaskensis (strain ATCC BAA-1058 / DSM 17464 / G20) (Desulfovibrio alaskensis)).